Consider the following 160-residue polypeptide: Nuclear transcription factor Y subunit B-5 (160 aa).

A DNA-binding region spans residues 56–62 (LPIANVG). The subunit association domain (SAD) stretch occupies residues 83 to 94 (MQECVSEFISFV).

The protein belongs to the NFYB/HAP3 subunit family. Heterotrimeric transcription factor composed of three components, NF-YA, NF-YB and NF-YC. NF-YB and NF-YC must interact and dimerize for NF-YA association and DNA binding. As to expression, expressed in flowers and siliques.

It is found in the nucleus. Its function is as follows. Component of the NF-Y/HAP transcription factor complex. The NF-Y complex stimulates the transcription of various genes by recognizing and binding to a CCAAT motif in promoters. This chain is Nuclear transcription factor Y subunit B-5 (NFYB5), found in Arabidopsis thaliana (Mouse-ear cress).